The chain runs to 143 residues: MSAVPSVQTFGKKKSATAVAHVKAGKGLIKVNGSPITLVQPEILRFKVYEPLLLVGLDKFANIDIRVRVTGGGHVSQVYAIRQAIAKGLVAYHQKFVDEQSKNELKKAFTSYDRTLLIADSRRPEPKKFGGRGARARFQKSYR.

The disordered stretch occupies residues 123-143 (RPEPKKFGGRGARARFQKSYR). Residues 134–143 (ARARFQKSYR) show a composition bias toward basic residues.

The protein belongs to the universal ribosomal protein uS9 family.

The sequence is that of Small ribosomal subunit protein uS9 (RPS16) from Eremothecium gossypii (strain ATCC 10895 / CBS 109.51 / FGSC 9923 / NRRL Y-1056) (Yeast).